Here is a 219-residue protein sequence, read N- to C-terminus: Thiopurine S-methyltransferase (219 aa).

S-adenosyl-L-methionine-binding residues include Trp10, Leu45, Glu66, and Arg123.

It belongs to the class I-like SAM-binding methyltransferase superfamily. TPMT family.

The protein localises to the cytoplasm. The enzyme catalyses S-adenosyl-L-methionine + a thiopurine = S-adenosyl-L-homocysteine + a thiopurine S-methylether.. In Marinobacter nauticus (strain ATCC 700491 / DSM 11845 / VT8) (Marinobacter aquaeolei), this protein is Thiopurine S-methyltransferase.